Reading from the N-terminus, the 302-residue chain is uncharacterized protein (302 aa).

Disordered stretches follow at residues 15–34, 143–195, and 221–246; these read RHST…RFHK, GMPL…PSHL, and GSEA…RESV. The span at 172–189 shows a compositional bias: basic and acidic residues; sequence HSDENKATGQGRENRDQP.

This is an uncharacterized protein from Homo sapiens (Human).